A 428-amino-acid chain; its full sequence is Enolase (428 aa).

Residue glutamine 163 participates in (2R)-2-phosphoglycerate binding. Glutamate 205 serves as the catalytic Proton donor. Mg(2+) contacts are provided by aspartate 242, glutamate 285, and aspartate 312. (2R)-2-phosphoglycerate contacts are provided by lysine 337, arginine 366, serine 367, and lysine 388. The Proton acceptor role is filled by lysine 337.

It belongs to the enolase family. The cofactor is Mg(2+).

It localises to the cytoplasm. The protein resides in the secreted. The protein localises to the cell surface. It carries out the reaction (2R)-2-phosphoglycerate = phosphoenolpyruvate + H2O. It functions in the pathway carbohydrate degradation; glycolysis; pyruvate from D-glyceraldehyde 3-phosphate: step 4/5. Catalyzes the reversible conversion of 2-phosphoglycerate (2-PG) into phosphoenolpyruvate (PEP). It is essential for the degradation of carbohydrates via glycolysis. The polypeptide is Enolase (Neisseria meningitidis serogroup B (strain ATCC BAA-335 / MC58)).